Here is a 341-residue protein sequence, read N- to C-terminus: S-adenosylmethionine:tRNA ribosyltransferase-isomerase (341 aa).

It belongs to the QueA family. In terms of assembly, monomer.

Its subcellular location is the cytoplasm. The catalysed reaction is 7-aminomethyl-7-carbaguanosine(34) in tRNA + S-adenosyl-L-methionine = epoxyqueuosine(34) in tRNA + adenine + L-methionine + 2 H(+). Its pathway is tRNA modification; tRNA-queuosine biosynthesis. Functionally, transfers and isomerizes the ribose moiety from AdoMet to the 7-aminomethyl group of 7-deazaguanine (preQ1-tRNA) to give epoxyqueuosine (oQ-tRNA). This Clostridium botulinum (strain Eklund 17B / Type B) protein is S-adenosylmethionine:tRNA ribosyltransferase-isomerase.